A 995-amino-acid chain; its full sequence is Polyprotein nsP1234 (995 aa).

ADP-D-ribose is bound by residues Gly30 and Phe32. Residues Cys180, Cys182, Cys205, and Cys223 each coordinate Zn(2+). 2 short sequence motifs (FGDF; binding to host G3BP1) span residues Phe347–Leu350 and Phe364–Phe367. The 116-residue stretch at Asp749–Ala864 folds into the RdRp catalytic domain.

In terms of assembly, interacts with mRNA-capping enzyme nsP1. Interacts with host DDX1. Interacts with host DDX3. Interacts (via C-terminus) with host G3BP1; this interaction inhibits the formation of host stress granules on viral mRNAs and the nsp3-G3BP1 complexes bind viral RNAs and probably orchestrate the assembly of viral replication complexes. Interacts (via C-terminus) with host G3BP2; this interaction inhibits the formation of host stress granules on viral mRNAs and the nsp3-G3BP2 complexes bind viral RNAs and probably orchestrate the assembly of viral replication complexes. As to quaternary structure, interacts with mRNA-capping enzyme nsP1. Interacts with protease nsP2. interacts with itself. Mg(2+) serves as cofactor. It depends on Mn(2+) as a cofactor. In terms of processing, polyprotein P1234: Specific enzymatic cleavages in vivo yield mature proteins. The processing of the polyprotein is temporally regulated. In early stages (1.7 hpi), P1234 is first cleaved in trans through its nsP2 protease activity, releasing P123' and nsP4, which associate to form the early replication complex. At the same time, P1234 is also cut at the nsP1/nsP2 site early in infection but with lower efficiency. After replication of the viral minus-strand RNAs (4 hpi), the polyproteins are cut at the nsP1/nsP2 and nsP2/nsP3 sites very efficiently, preventing accumulation of P123' and P1234 and allowing the formation of the late replication complex. NsP3'/nsP4 site is not cleaved anymore and P34 is produced rather than nsP4. Post-translationally, specific enzymatic cleavages in vivo yield mature proteins. The processing of the polyprotein is temporally regulated. In early stages (1.7 hpi), P123 is cleaved at the nsP1/nsP2 site with low efficiency. After replication of the viral minus-strand RNAs (4 hpi), the polyproteins are cut at the nsP1/nsP2 and nsP2/nsP3 sites very efficiently, preventing accumulation of P123 and allowing the formation of the late replication complex. Specific enzymatic cleavages in vivo yield mature proteins. The processing of the polyprotein is temporally regulated. In early stages (1.7 hpi), P123' is cleaved at the nsP1/nsP2 site with low efficiency. After replication of the viral minus-strand RNAs (4 hpi), the polyproteins are cut at the nsP1/nsP2 and nsP2/nsP3 sites very efficiently, preventing accumulation of P123' and allowing the formation of the late replication complex. In terms of processing, phosphorylated by host on serines and threonines. Post-translationally, ubiquitinated; targets the protein for rapid degradation via the ubiquitin system. Nsp4 is present in extremely low quantities due to low frequency of translation through the amber stop-codon and the degradation by the ubiquitin pathway.

The protein localises to the host cytoplasmic vesicle membrane. The catalysed reaction is RNA(n) + a ribonucleoside 5'-triphosphate = RNA(n+1) + diphosphate. It catalyses the reaction RNA(n) + ATP = RNA(n)-3'-adenine ribonucleotide + diphosphate. It carries out the reaction 4-O-(ADP-D-ribosyl)-L-aspartyl-[protein] + H2O = L-aspartyl-[protein] + ADP-D-ribose + H(+). The enzyme catalyses 5-O-(ADP-D-ribosyl)-L-glutamyl-[protein] + H2O = L-glutamyl-[protein] + ADP-D-ribose + H(+). The catalysed reaction is ADP-alpha-D-ribose 1''-phosphate + H2O = ADP-D-ribose + phosphate. Polyprotein P1234: Inactive precursor of the viral replicase, which is activated by cleavages carried out by the viral protease nsP2. Functionally, the early replication complex formed by the polyprotein P123 and nsP4 synthesizes minus-strand RNAs. As soon P123 is cleaved into mature proteins, the plus-strand RNAs synthesis begins. Its function is as follows. The early replication complex formed by the polyprotein P123' and nsP4 synthesizes minus-strand RNAs. Polyprotein P123' is a short-lived polyprotein that accumulates during early stage of infection. As soon P123' is cleaved into mature proteins, the plus-strand RNAs synthesis begins. In terms of biological role, seems to be essential for minus-strand RNAs and subgenomic 26S mRNAs synthesis. Displays mono-ADP-ribosylhydrolase activity. ADP-ribosylation is a post-translational modification that controls various processes of the host cell and the virus probably needs to revert it for optimal viral replication. Binds proteins of FXR family and sequesters them into the viral RNA replication complexes thereby inhibiting the formation of host stress granules on viral mRNAs. The nsp3'-FXR complexes bind viral RNAs and probably orchestrate the assembly of viral replication complexes, thanks to the ability of FXR family members to self-assemble and bind DNA. Seems to be essential for minus-strand RNAs and subgenomic 26S mRNAs synthesis. Displays mono-ADP-ribosylhydrolase activity. ADP-ribosylation is a post-translantional modification that controls various processes of the host cell and the virus probably needs to revert it for optimal viral replication. Binds proteins of G3BP family and sequesters them into the viral RNA replication complexes thereby inhibiting the formation of host stress granules on viral mRNAs. The nsp3-G3BP complexes bind viral RNAs and probably orchestrate the assembly of viral replication complexes, thanks to the ability of G3BP family members to self-assemble and bind DNA. Functionally, RNA dependent RNA polymerase. Replicates genomic and antigenomic RNA by recognizing replications specific signals. The early replication complex formed by the polyprotein P123 and nsP4 synthesizes minus-strand RNAs. The late replication complex composed of fully processed nsP1-nsP4 is responsible for the production of genomic and subgenomic plus-strand RNAs. The core catalytic domain of nsP4 also possesses terminal adenylyltransferase (TATase) activity that is probably involved in maintenance and repair of the poly(A) tail, an element required for replication of the viral genome. The protein is Polyprotein nsP1234 of Middelburg virus.